A 699-amino-acid polypeptide reads, in one-letter code: TPR repeat-containing thioredoxin TTL1 (699 aa).

Residues 1–211 (MPKSVKPISE…SSSRSSSTVA (211 aa)) are disordered. Positions 9–20 (SESDKLSDHLRD) are enriched in basic and acidic residues. 2 positions are modified to phosphoserine: serine 39 and serine 42. Low complexity-rich tracts occupy residues 52–70 (TTTTTTTTTSSSSSSSSGS) and 83–135 (RSNS…TSPA). A compositionally biased stretch (gly residues) spans 166 to 182 (SGTGTYGHGSIMRGGGI). Positions 195–210 (NSPVNVGSSSRSSSTV) are enriched in low complexity. TPR repeat units follow at residues 227–260 (SEEVKRVGNEMYRKGLFNEALKLYDRAIALSPTN), 262–294 (AYRSNRAAALIGLSRIGEAVKECEDAVRSDPNY), 296–328 (RAHHRLALLLIRLGQVNSARKHLCFLGRPSDPM), 419–452 (AYIYFVKAQIEMALGRFENAVMAAEKASQIDPRC), 465–498 (VARARARGNDLYKSERYTEASSAYAEGLRLDPCN), 499–532 (AILYCNRAACWFKLGMWERSIEDCNQALRYQPSY), and 534–566 (KPLLRRAASNSKMERWGAAVSDYEALIRELPHD). The Thioredoxin domain occupies 605–691 (QFKSAMNLPG…IVCPSKEVLE (87 aa)).

As to expression, expressed in the root elongation zone, stele, root cap, embryo vascular system, leaf axilar buds, silique abscission zone and guard cells.

Involved in responses to osmotic stress and abscisic acid (ABA). May act as a positive regulator of ABA signaling during germination and seedling development under stress. This chain is TPR repeat-containing thioredoxin TTL1 (TTL1), found in Arabidopsis thaliana (Mouse-ear cress).